The chain runs to 1358 residues: DNA-directed RNA polymerase subunit beta (1358 aa).

The protein belongs to the RNA polymerase beta chain family. As to quaternary structure, the RNAP catalytic core consists of 2 alpha, 1 beta, 1 beta' and 1 omega subunit. When a sigma factor is associated with the core the holoenzyme is formed, which can initiate transcription.

The catalysed reaction is RNA(n) + a ribonucleoside 5'-triphosphate = RNA(n+1) + diphosphate. In terms of biological role, DNA-dependent RNA polymerase catalyzes the transcription of DNA into RNA using the four ribonucleoside triphosphates as substrates. The chain is DNA-directed RNA polymerase subunit beta from Francisella tularensis subsp. holarctica (strain LVS).